Here is an 84-residue protein sequence, read N- to C-terminus: Small ribosomal subunit protein bS20 (84 aa).

The tract at residues 1-25 (MPVIKSAMKRVRTSEKAAARNRSQM) is disordered.

It belongs to the bacterial ribosomal protein bS20 family.

Binds directly to 16S ribosomal RNA. In Pediococcus pentosaceus (strain ATCC 25745 / CCUG 21536 / LMG 10740 / 183-1w), this protein is Small ribosomal subunit protein bS20.